The following is a 557-amino-acid chain: MDQSRVLLWVKAEPFIVGALQIPPPSKFSLHYLRKISTYVRTRTIEGGYPRLSWSTWRHIACGKLQLAKDLAWLYFEMFDSLAMKTPEERLEWSEILSNCMSEDEVEKQRNQLSVDTLQFLLFLHIQQLNKVSLRTSLIGEEWPSPRHRAQSPDLTEKSSCHNKNWNDYSHQAFVCDHLSDLLELLLDPEQLTASFHSTHSSLVSREAVVALSFLIEGTVSGARKIYPLYELALWHPLHAETGFSKASKTFSFYKLEAWLRTCLTGNPFGTSACLKSGKKLAWAHQVEGTTKRAKIACNTHVAPRMHRMVVMSQVYKQTLAKSSDTLVGAHVKIHRCNESFIYLLSPLRSVTIEKCRNSTFVLGPVQTALHLHSCDNVKVIAVCHRLSISSTTGCIFHILTPTRPLILSGNQRVTFAPFHTHYPMLEDHMARTGLATVPNYWDNPMIVCRENSSPSVFRLLPPCEFYVFIIPFEMEGDTTEIPGGLPSAYQKALSQRKKKIQVWQKTVKEARLTKDQRKQFQVLVENKFYEWLINTGHRQQLDSLVPPAAGSKQAAG.

The C-CAP/cofactor C-like domain occupies 290–435 (TTKRAKIACN…LEDHMARTGL (146 aa)).

Belongs to the TBCC family.

Its subcellular location is the cytoplasm. The protein localises to the cytoskeleton. The protein resides in the microtubule organizing center. It is found in the centrosome. It localises to the spindle pole. Its function is as follows. Plays a role in the regulation of centrosome and Golgi apparatus positioning, with consequences on cell shape and cell migration. In Bos taurus (Bovine), this protein is TBCC domain-containing protein 1 (TBCCD1).